A 238-amino-acid polypeptide reads, in one-letter code: Serine protease SplE (238 aa).

Positions 1-36 (MNKNIIIKSIAALTILTSVTGVGTTVVEGIQQTAKA) are cleaved as a signal peptide. Active-site charge relay system residues include His75, Asp113, and Ser191.

Belongs to the peptidase S1B family.

The protein localises to the secreted. This Staphylococcus aureus (strain USA300) protein is Serine protease SplE (splE).